A 644-amino-acid chain; its full sequence is Forkhead box protein O (644 aa).

The tract at residues 39-75 (FEPQTRARSNTWPCPRPENFVEPPDELDSTKASNQQL) is disordered. Residue T49 is modified to Phosphothreonine; by PKB/AKT1. Phosphoserine is present on S80. Residues 100–206 (WGNLSYADLI…ETSRYEKRRG (107 aa)) constitute a DNA-binding region (fork-head). Disordered regions lie at residues 187 to 210 (KSVR…RAKK), 222 to 276 (GLND…SPIR), 329 to 386 (QQQQ…QTLQ), 412 to 435 (SPNS…DSLN), and 578 to 612 (QQHL…NSSL). The residue at position 195 (S195) is a Phosphoserine; by PKB/AKT1. 2 stretches are compositionally biased toward polar residues: residues 226–235 (ATPSPSSSVS) and 261–270 (RASSNASSCG). S264 bears the Phosphoserine; by PKB/AKT1 mark. Phosphoserine occurs at positions 267, 268, and 273. The span at 329–340 (QQQQQQQQQQQQ) shows a compositional bias: low complexity. A compositionally biased stretch (pro residues) spans 350–359 (SQPPPPPYQP). Residues 360 to 374 (PQLQQQQQQQPSYSL) show a composition bias toward low complexity. A compositionally biased stretch (polar residues) spans 412–421 (SPNSVTTTMS).

In terms of assembly, interacts with melt.

The protein resides in the cytoplasm. It is found in the nucleus. Its function is as follows. Transcription factor involved in the regulation of the insulin signaling pathway. Consistently activates both the downstream target Thor\d4EBP and the feedback control target InR. Involved in negative regulation of the cell cycle, modulating cell growth and proliferation. In response to cellular stresses, such as nutrient deprivation or increased levels of reactive oxygen species, foxo is activated and inhibits growth through the action of target genes such as Thor. Foxo activated in the adult fat body can regulate lifespan in adults; an insulin peptide itself may function as one secondary messenger of insulin-regulated aging. Also regulates Lip4, homolog of human acid lipases, thereby acting as a key modulator of lipid metabolism by insulin signaling and integrates insulin responses to glucose and lipid homeostasis. The protein is Forkhead box protein O of Drosophila pseudoobscura pseudoobscura (Fruit fly).